The primary structure comprises 154 residues: Small ribosomal subunit protein uS15 (154 aa).

A compositionally biased stretch (basic residues) spans 1 to 10; that stretch reads MARMHSRRRG. Residues 1–32 are disordered; that stretch reads MARMHSRRRGSSGSDRPTADEPPEWSEVDEDA. Residues 21-32 are compositionally biased toward acidic residues; sequence EPPEWSEVDEDA.

The protein belongs to the universal ribosomal protein uS15 family. In terms of assembly, part of the 30S ribosomal subunit.

The protein is Small ribosomal subunit protein uS15 of Natronomonas pharaonis (strain ATCC 35678 / DSM 2160 / CIP 103997 / JCM 8858 / NBRC 14720 / NCIMB 2260 / Gabara) (Halobacterium pharaonis).